Reading from the N-terminus, the 367-residue chain is GTP cyclohydrolase FolE2 (367 aa).

This sequence belongs to the GTP cyclohydrolase IV family.

The enzyme catalyses GTP + H2O = 7,8-dihydroneopterin 3'-triphosphate + formate + H(+). The protein operates within cofactor biosynthesis; 7,8-dihydroneopterin triphosphate biosynthesis; 7,8-dihydroneopterin triphosphate from GTP: step 1/1. Functionally, converts GTP to 7,8-dihydroneopterin triphosphate. In Roseobacter denitrificans (strain ATCC 33942 / OCh 114) (Erythrobacter sp. (strain OCh 114)), this protein is GTP cyclohydrolase FolE2.